The primary structure comprises 400 residues: Keratin, type I cytoskeletal 19 (400 aa).

A head region spans residues 1–79 (MTSYSYRQSS…TASDGLLAGN (79 aa)). The residue at position 7 (R7) is an Omega-N-methylarginine. A phosphoserine mark is found at S14 and S22. R24 bears the Asymmetric dimethylarginine; alternate mark. R24 is subject to Omega-N-methylarginine; alternate. R32 bears the Omega-N-methylarginine mark. S35 and S40 each carry phosphoserine. Residues R43 and R51 each carry the omega-N-methylarginine modification. A phosphoserine mark is found at S57 and S72. Residues 80 to 115 (EKLTMQNLNDRLASYLDKVRALEAANGELEVKIRDW) form a coil 1A region. Residues 80-391 (EKLTMQNLND…SLLEGQEDHY (312 aa)) enclose the IF rod domain. A linker 1 region spans residues 116-133 (YQKQGPGPSRDYSHYYTT). Residues 134–225 (IQDLRDKILG…KNHEEEISTL (92 aa)) form a coil 1B region. The interval 226-248 (RGQVGGQVSVEVDSAPGTDLAKI) is linker 12. Residues 244–390 (DLAKILSDMR…RSLLEGQEDH (147 aa)) form a necessary for interaction with PNN region. Residues 249–387 (LSDMRSQYEV…ATYRSLLEGQ (139 aa)) are coil 2. Position 323 is a phosphothreonine (T323). Residues 388-400 (EDHYNNLSASKVL) are rod-like helical tail. Y391 carries the post-translational modification Phosphotyrosine. S395 and S397 each carry phosphoserine.

Belongs to the intermediate filament family. In terms of assembly, heterotetramer of two type I and two type II keratins. Interacts with PNN and the actin-binding domain of DMD. Interacts with HCV core protein. As to quaternary structure, (Microbial infection) Interacts with hepatitis C virus/HCV core protein. Expressed in a defined zone of basal keratinocytes in the deep outer root sheath of hair follicles. Also observed in sweat gland and mammary gland ductal and secretory cells, bile ducts, gastrointestinal tract, bladder urothelium, oral epithelia, esophagus, ectocervical epithelium (at protein level). Expressed in epidermal basal cells, in nipple epidermis and a defined region of the hair follicle. Also seen in a subset of vascular wall cells in both the veins and artery of human umbilical cord, and in umbilical cord vascular smooth muscle. Observed in muscle fibers accumulating in the costameres of myoplasm at the sarcolemma in structures that contain dystrophin and spectrin.

In terms of biological role, involved in the organization of myofibers. Together with KRT8, helps to link the contractile apparatus to dystrophin at the costameres of striated muscle. The polypeptide is Keratin, type I cytoskeletal 19 (KRT19) (Homo sapiens (Human)).